Consider the following 307-residue polypeptide: ATP-dependent (S)-NAD(P)H-hydrate dehydratase (307 aa).

One can recognise a YjeF C-terminal domain in the interval Met1–Val291. (6S)-NADPHX contacts are provided by residues Gly96 and Asn150–Arg156. ATP contacts are provided by residues Lys194–Asp198 and Ser214–Gly223. Asp224 provides a ligand contact to (6S)-NADPHX.

It belongs to the NnrD/CARKD family. The cofactor is Mg(2+).

The enzyme catalyses (6S)-NADHX + ATP = ADP + phosphate + NADH + H(+). The catalysed reaction is (6S)-NADPHX + ATP = ADP + phosphate + NADPH + H(+). Functionally, catalyzes the dehydration of the S-form of NAD(P)HX at the expense of ATP, which is converted to ADP. Together with NAD(P)HX epimerase, which catalyzes the epimerization of the S- and R-forms, the enzyme allows the repair of both epimers of NAD(P)HX, a damaged form of NAD(P)H that is a result of enzymatic or heat-dependent hydration. The sequence is that of ATP-dependent (S)-NAD(P)H-hydrate dehydratase from Caenorhabditis briggsae.